The primary structure comprises 315 residues: Type II methyltransferase M.Bsp6I (315 aa).

The SAM-dependent MTase C5-type domain occupies 2-315; that stretch reads LQIASLFAGV…IAENIYKSML (314 aa). The active site involves cysteine 73.

Belongs to the class I-like SAM-binding methyltransferase superfamily. C5-methyltransferase family.

The enzyme catalyses a 2'-deoxycytidine in DNA + S-adenosyl-L-methionine = a 5-methyl-2'-deoxycytidine in DNA + S-adenosyl-L-homocysteine + H(+). Functionally, a methylase that recognizes the double-stranded sequence 5'-GCNGC-3', methylates C-? on both strands, and protects the DNA from cleavage by the Bsp6I endonuclease. The sequence is that of Type II methyltransferase M.Bsp6I from Bacillus sp. (strain RFL6).